Consider the following 470-residue polypeptide: Ribulose bisphosphate carboxylase large chain (470 aa).

Substrate is bound by residues N118 and T168. The active-site Proton acceptor is the K170. Residue K172 participates in substrate binding. Mg(2+) is bound by residues K196, D198, and E199. K196 bears the N6-carboxylysine mark. Catalysis depends on H289, which acts as the Proton acceptor. 3 residues coordinate substrate: R290, H322, and S374. The short motif at 459–465 (EIKFEFD) is the Interacts with RbcX2 element.

It belongs to the RuBisCO large chain family. Type I subfamily. Heterohexadecamer of 8 large chains and 8 small chains; disulfide-linked. The disulfide link is formed within the large subunit homodimers. Requires Mg(2+) as cofactor. The disulfide bond which can form in the large chain dimeric partners within the hexadecamer appears to be associated with oxidative stress and protein turnover.

It localises to the carboxysome. It catalyses the reaction 2 (2R)-3-phosphoglycerate + 2 H(+) = D-ribulose 1,5-bisphosphate + CO2 + H2O. It carries out the reaction D-ribulose 1,5-bisphosphate + O2 = 2-phosphoglycolate + (2R)-3-phosphoglycerate + 2 H(+). RuBisCO catalyzes two reactions: the carboxylation of D-ribulose 1,5-bisphosphate, the primary event in carbon dioxide fixation, as well as the oxidative fragmentation of the pentose substrate in the photorespiration process. Both reactions occur simultaneously and in competition at the same active site. The chain is Ribulose bisphosphate carboxylase large chain from Picosynechococcus sp. (strain ATCC 27264 / PCC 7002 / PR-6) (Agmenellum quadruplicatum).